A 479-amino-acid chain; its full sequence is MSIVVKNNIHWVGQRDWEVRDFHGTEYKTLRGSSYNSYLIREEKNVLIDTVDHKFSREFVQNLRNEIDLADIDYIVINHAEEDHAGALTELMAQIPDTPIYCTANAIDSINGHHHHPEWNFNVVKTGDTLDIGNGKQLIFVETPMLHWPDSMMTYLTGDAVLFSNDAFGQHYCDEHLFNDEVDQTELFEQCQRYYANILTPFSRLVTPKITEILGFNLPVDMIATSHGVVWRDNPTQIVELYLKWAADYQEDRITIFYDTMSNNTRMMADAIAQGIAETDPRVAVKIFNVARSDKNEILTNVFRSKGVLVGTSTMNNVMMPKIAGLVEEMTGLRFRNKRASAFGSHGWSGGAMDRLSTRLQDAGFEMSLSLKAKWRPDQDALELCREHGREIARQWALAPLPQSTVNTVVKEETSATTTADLGPRMQCSVCQWIYDPAKGEPMQDVAPGTPWSEVPDNFLCPECSLGKDVFDELASEAK.

The interval 30–210 is zinc metallo-hydrolase; it reads LRGSSYNSYL…PFSRLVTPKI (181 aa). The Fe cation site is built by histidine 79, glutamate 81, aspartate 83, histidine 147, aspartate 166, and histidine 227. The Flavodoxin-like domain maps to 254–393; it reads ITIFYDTMSN…LCREHGREIA (140 aa). Residues 260 to 264 and 342 to 369 contribute to the FMN site; these read TMSNN and AFGS…EMSL. The 52-residue stretch at 423-474 folds into the Rubredoxin-like domain; that stretch reads GPRMQCSVCQWIYDPAKGEPMQDVAPGTPWSEVPDNFLCPECSLGKDVFDEL. Positions 428, 431, 461, and 464 each coordinate Fe cation.

In the N-terminal section; belongs to the zinc metallo-hydrolase group 3 family. As to quaternary structure, homotetramer. The cofactor is Fe cation. FMN is required as a cofactor.

It is found in the cytoplasm. The protein operates within nitrogen metabolism; nitric oxide reduction. In terms of biological role, anaerobic nitric oxide reductase; uses NADH to detoxify nitric oxide (NO), protecting several 4Fe-4S NO-sensitive enzymes. Has at least 2 reductase partners, only one of which (NorW, flavorubredoxin reductase) has been identified. NO probably binds to the di-iron center; electrons enter from the NorW at rubredoxin and are transferred sequentially to the FMN center and the di-iron center. Also able to function as an aerobic oxygen reductase. In Shigella flexneri serotype 5b (strain 8401), this protein is Anaerobic nitric oxide reductase flavorubredoxin.